A 1550-amino-acid chain; its full sequence is Adhesion G protein-coupled receptor L3 (1550 aa).

Residues 1 to 19 form the signal peptide; sequence MCPPQLFILMMLLAPVVHG. Topologically, residues 20–948 are extracellular; the sequence is GKHNERHPAL…VHDLLLDVIT (929 aa). The interval 34–80 is disordered; the sequence is RHAEHSPGGPLPPRHLLQQPAAERSTAHRGQGPRGTARGVRGPGAPG. The 90-residue stretch at 103 to 192 folds into the SUEL-type lectin domain; that stretch reads SCESYPIELR…KYLEVQYECV (90 aa). Disulfide bonds link Cys-104/Cys-134, Cys-113/Cys-191, Cys-146/Cys-178, Cys-159/Cys-165, and Cys-203/Cys-385. An N-linked (GlcNAc...) asparagine glycan is attached at Asn-161. One can recognise an Olfactomedin-like domain in the interval 202–461; that stretch reads LCPGLLKGVY…VVKYSLDFGP (260 aa). Positions 317–347 are interaction with FLRT3; it reads YHDTSPYRWGGKSDIDLAVDENGLWVIYATE. Residues Asp-332, Asn-380, Ala-381, and Val-435 each contribute to the Ca(2+) site. A disordered region spans residues 518–538; that stretch reads NLGRSTTPSLPGRRNRSTSTP. Asn-532, Asn-616, Asn-839, Asn-884, and Asn-910 each carry an N-linked (GlcNAc...) asparagine glycan. A GAIN-B domain is found at 755–934; the sequence is DIVRENTDNI…AVLMAHVEVK (180 aa). 2 cysteine pairs are disulfide-bonded: Cys-885–Cys-916 and Cys-904–Cys-918. A GPS region spans residues 885–934; it reads CSFWSYSKRTMTGYWSTQGCRLLTTNKTHTTCSCNHLTNFAVLMAHVEVK. The interval 922 to 938 is stachel; it reads TNFAVLMAHVEVKHSDA. A helical membrane pass occupies residues 949 to 969; the sequence is WVGILLSLVCLLICIFTFCFF. Over 970–977 the chain is Cytoplasmic; the sequence is RGLQSDRN. A helical membrane pass occupies residues 978 to 998; that stretch reads TIHKNLCISLFVAELLFLIGI. N-linked (GlcNAc...) asparagine glycosylation is present at Asn-999. The Extracellular portion of the chain corresponds to 999-1006; that stretch reads NRTDQPIA. Residues 1007–1027 traverse the membrane as a helical segment; sequence CAVFAALLHFFFLAAFTWMFL. The Cytoplasmic segment spans residues 1028–1048; sequence EGVQLYIMLVEVFESEHSRRK. The chain crosses the membrane as a helical span at residues 1049–1069; that stretch reads YFYLVGYGMPALIVAVSAAVD. Over 1070–1087 the chain is Extracellular; the sequence is YRSYGTDKVCWLRLDTYF. A helical membrane pass occupies residues 1088–1108; that stretch reads IWSFIGPATLIIMLNVIFLGI. At 1109–1141 the chain is on the cytoplasmic side; that stretch reads ALYKMFHHTAILKPESGCLDNINYEDNRPFIKS. The chain crosses the membrane as a helical span at residues 1142–1162; sequence WVIGAIALLCLLGLTWAFGLM. At 1163–1168 the chain is on the extracellular side; the sequence is YINEST. Residue Asn-1165 is glycosylated (N-linked (GlcNAc...) asparagine). Residues 1169-1189 form a helical membrane-spanning segment; it reads VIMAYLFTIFNSLQGMFIFIF. The Cytoplasmic portion of the chain corresponds to 1190-1550; that stretch reads HCVLQKKVRK…KGPAHLVTSL (361 aa). Residues 1213–1236 form a disordered region; sequence KSTESSIGSGKTSGSRTPGRYSTG. Phosphoserine is present on Ser-1253. 2 disordered regions span residues 1410–1435 and 1528–1550; these read LLPPRVYSTDNHQPHHYSRRRLPQDH and PPNKDGASPEGTSKGPAHLVTSL. Ser-1535 bears the Phosphoserine mark. The PDZ-binding signature appears at 1545–1550; it reads HLVTSL.

The protein belongs to the G-protein coupled receptor 2 family. LN-TM7 subfamily. Heterodimer of 2 chains generated by proteolytic processing; the large extracellular N-terminal fragment and the membrane-bound C-terminal fragment predominantly remain associated and non-covalently linked. Interacts (via olfactomedin-like domain) with FLRT1 (via extracellular domain). Interacts (via olfactomedin-like domain) with FLRT2 (via extracellular domain). Interacts (via olfactomedin-like domain) with FLRT3 (via extracellular domain); the interaction is direct. Interacts (via extracellular domain) with TENM1. Interacts (via extracellular domain) with TENM2. Interacts (via extracellular domain) with TENM3. Identified in a complex with FLRT3 and UNC5B; does not interact with UNC5B by itself. Identified in a complex with FLRT3 and UNC5D; does not interact with UNC5D by itself. In terms of assembly, interacts (via PDZ-binding motif) with SHANK3. Interacts (via PDZ-binding motif) with DLG4. Autoproteolytically processed at the GPS region of the GAIN-B domain; this cleavage modulates receptor activity. As to expression, predominantly expressed in brain, followed by heart, placenta, pancreas, kidney and testis.

The protein resides in the cell membrane. It localises to the postsynaptic cell membrane. It is found in the cell projection. Its subcellular location is the axon. The protein localises to the cell junction. Its activity is regulated as follows. Forms a heterodimer of 2 chains generated by proteolytic processing that remain associated through non-covalent interactions mediated by the GAIN-B domain. In the inactivated receptor, the Stachel sequence (also named stalk) is embedded in the GAIN-B domain, where it adopts a beta-strand conformation. On activation, the Stachel moves into the 7 transmembrane region and adopts a twisted hook-shaped configuration that forms contacts within the receptor, leading to coupling of a G-alpha protein, which activates signaling. The cleaved GAIN-B and N-terminal domains can then dissociate from the rest of the receptor. Orphan adhesion G-protein coupled receptor (aGPCR), which mediates synapse specificity. Ligand binding causes a conformation change that triggers signaling via guanine nucleotide-binding proteins (G proteins) and modulates the activity of downstream effectors. ADGRL3 is coupled with different classes of G alpha proteins, such as G(12)/G(13), G(s), G(i) or G(q), depending on the context. Coupling to G(12)/G(13) G proteins, which mediates the activation Rho small GTPases is the most efficient. Following G-protein coupled receptor activation, associates with cell adhesion molecules that are expressed at the surface of adjacent cells to direct synapse specificity. Specifically mediates the establishment of Schaffer-collateral synapses formed by CA3-region axons on CA1-region pyramidal neurons in the hippocampus. Localizes to postsynaptic spines in excitatory synapses in the S.oriens and S.radiatum and interacts with presynaptic cell adhesion molecules FLRT3 and TENM2, promoting synapse formation. Plays a role in the development of glutamatergic synapses in the cortex. Important in determining the connectivity rates between the principal neurons in the cortex. In terms of biological role, orphan adhesion G-protein coupled receptor (aGPCR), which mediates synapse specificity. Ligand binding causes a conformation change that triggers signaling via guanine nucleotide-binding proteins (G proteins) and modulates the activity of downstream effectors, such as adenylate cyclase. Isoform 1 is specifically coupled to G(s) G proteins and mediates activation of adenylate cyclase activity. Following G-protein coupled receptor activation, undergoes liquid-liquid phase transition, associates with (1) cell adhesion molecules that are expressed at the surface of adjacent cells, as well as (2) PDZ-containing proteins, such as SHANK3 and DLG4, in the cytoplasm to direct synapse formation. The sequence is that of Adhesion G protein-coupled receptor L3 from Rattus norvegicus (Rat).